The following is a 158-amino-acid chain: Cyclic pyranopterin monophosphate synthase (158 aa).

Residues 74-76 and 112-113 each bind substrate; these read MCH and ME. Aspartate 127 is a catalytic residue.

The protein belongs to the MoaC family. In terms of assembly, homohexamer; trimer of dimers.

It catalyses the reaction (8S)-3',8-cyclo-7,8-dihydroguanosine 5'-triphosphate = cyclic pyranopterin phosphate + diphosphate. It participates in cofactor biosynthesis; molybdopterin biosynthesis. In terms of biological role, catalyzes the conversion of (8S)-3',8-cyclo-7,8-dihydroguanosine 5'-triphosphate to cyclic pyranopterin monophosphate (cPMP). The polypeptide is Cyclic pyranopterin monophosphate synthase (Thermoanaerobacter pseudethanolicus (strain ATCC 33223 / 39E) (Clostridium thermohydrosulfuricum)).